The primary structure comprises 1499 residues: Streptococcal surface protein B (1499 aa).

Positions 1 to 37 are cleaved as a signal peptide; it reads MQKREVFGFRKSKVAKTLCGAVLGAALIAIADQQVLA. Residues 50–84 are disordered; sequence AVTTTGNPATNLPEAQGEATEAASQSQAQAGSKDG. Ag I/II A repeat units follow at residues 145 to 219, 220 to 301, 302 to 383, and 384 to 465; these read KKTT…QKAN, EDSQ…KKAK, EDND…KQAN, and ATNE…KKDF. Disordered regions lie at residues 689–709, 763–907, and 1409–1472; these read YADS…SEWD, TAPT…TPPV, and RTTT…TGTN. A compositionally biased stretch (basic and acidic residues) spans 694–705; sequence NAEKSRGARWDT. The span at 789–799 shows a compositional bias: pro residues; the sequence is PTPPVKTPDQP. Positions 800–815 are enriched in basic and acidic residues; sequence EPSKPEEPTYETEKPL. Positions 828-838 are enriched in pro residues; it reads PTPPVKIPDQP. The span at 839-854 shows a compositional bias: basic and acidic residues; it reads EPSKPEEPTYETEKPL. 2 stretches are compositionally biased toward pro residues: residues 867–877 and 888–907; these read PTPPVKTPDQP and DPLP…TPPV. Residues 1428–1450 show a composition bias toward basic and acidic residues; it reads KPKDPDKPETPKEPKVPSPKVED. The LPXTG sorting signal motif lies at 1466–1470; the sequence is LPKTG. At threonine 1469 the chain carries Pentaglycyl murein peptidoglycan amidated threonine. Residues 1470–1499 constitute a propeptide, removed by sortase; that stretch reads GTNDATYMPYLGLAALVGFLGLGLAKRKED.

It belongs to the antigen I/II family.

Its subcellular location is the secreted. The protein localises to the cell wall. The protein resides in the cell surface. Adhesin that mediates binding of bacteria to a variety of host cells. Plays a role in the bacterial invasion of dentinal tubules. A host immunostimulatory component, it modulates the innate immunity response. Plays a protective role against some antibiotics and cationic antimicrobial peptides (histatin-5, HTN3, but not beta-defensin 4A, DEFB4A). In Streptococcus gordonii (strain Challis / ATCC 35105 / BCRC 15272 / CH1 / DL1 / V288), this protein is Streptococcal surface protein B.